A 272-amino-acid polypeptide reads, in one-letter code: NADH-cytochrome b5 reductase 3 (272 aa).

One can recognise an FAD-binding FR-type domain in the interval 11-123; that stretch reads DIKYPLRLID…RGPNGLLVYQ (113 aa). At K13 the chain carries N6-acetyllysine. Y14 is subject to Phosphotyrosine. K21 carries the post-translational modification N6-acetyllysine. R63, P64, Y65, V80, K82, and Y84 together coordinate FAD. The residue at position 91 (K91) is an N6-acetyllysine. Positions 97, 98, 99, and 156 each coordinate FAD.

This sequence belongs to the flavoprotein pyridine nucleotide cytochrome reductase family. As to quaternary structure, component of a complex composed of cytochrome b5, NADH-cytochrome b5 reductase (CYB5R3) and MTARC2. Interacts with MTLN; the interaction is required to maintain cellular lipid composition and leads to stimulation of mitochondrial respiratory complex I activity. FAD serves as cofactor.

It is found in the endoplasmic reticulum membrane. It localises to the mitochondrion outer membrane. It carries out the reaction 2 Fe(III)-[cytochrome b5] + NADH = 2 Fe(II)-[cytochrome b5] + NAD(+) + H(+). Functionally, catalyzes the reduction of two molecules of cytochrome b5 using NADH as the electron donor. The protein is NADH-cytochrome b5 reductase 3 (CYB5R3) of Sus scrofa (Pig).